Here is a 1496-residue protein sequence, read N- to C-terminus: MNELMKIFGQVSGTQSFDQIRISIASPERIRSWSYGEIKKPETINYRTFKPERDGLFCARIFGPIKDYECLCGKYKRMKYRGIICEKCGVEVTLAKVRRERMGHIELASPVAHIWFLKSLPSRIGLLCDMTLKDLERILYFENYVVVEPGLTPLKIRELLTEEQYMRAVDEYGEDAFTAKIGAEAIRDMLTVIDLETEKAQLKVDLKETTSEAKRKKLVKRMKLVEAFMESGSRPEWMILEVIPVIPPELRPLVPLDGGRFATSDLNDLYRRVINRNNRLKRLIELRAPEIIVRNEKRMLQEAVDALFDNGRRGRAITGANKRPLKSLSDMLKGKQGRFRQNLLGKRVDYSGRSVIVVGPELKLHQCGLPKKMALELFKPFVYSKLELYGMATTIKAAKRMVEKERPEVWDILEEVIREHPVMLNRAPTLHRLGIQAFEPVLIEGKAIQLHPLVCTAFNADFDGDQMAVHVPLSLEAQLEARVLMMSTNNILSPANGKPIIVPSQDIVLGIYYITMERDEVPGQVLKIRSMDELKGAIANNAILFYCPTDPNTKIDTKDLDTLLDRLASRNVTAHRRVNPSSKDALEAGLKGGHLRLFNVEKPGVPLVFADVNDAEKAIKDGKAILFKVPVFVNMAEIEEALTEKTITLHTKIRARFDTVDSEGTPVTQIVDTTPGRMMLSVILPKNKNVPFSLINRLLTKKEIQNVIDVVYRHCGQKETVIFADRVMGLGYSNAFKAGISFGKDDLVIPPEKETLVGETEEKAKEYEQQYQDGLITQGEKYNKVVDAWSKCTDDVADAMMKQISSLVPGKQINSIYMMAHSGARGSAAQMKQLAGMRGLMAKPSGEIIETPIISNFKEGLTVLEYFNSTHGARKGLADTALKTANSGYLTRRLVDVAQDAIICEEDCGTTNGLTVSPVIEGGEVIASLAERILGRSAARDIVNPLTGEVIVKAAQMIQETEVELIDAAGIETVVIRSVLTCDSEEGVCGSCYGRDLARGTRVNVGEAVGVIAAQSIGEPGTQLTMRTFHIGGAAQRGAEQSSIEATFDGTVQVINRNVVVNSSGASIVMSRNCEVALLDINNRERARHRVPYGAKLLVDEAQKVTKGTKLAEWDPYTLPIITERAGVAHYVDLTEGLSMREVVDEATGIASKVVVDWKQQPRGADLRPRVTLRDEKGEELLLANGLEARYFMSVDAILSVENNTKVNAGDVLARIPRESSKTRDITGGLPRVAELFEARKPKDHAIISDCDGRVEFGKDYKSKRRILVVPEEGDAIEYLIPKGKHISVQEGDYVRRGDPLMDGNPVPHDILKVLGVEALAQYLINEIQEVYRLQGVKINDKHIEVIVRQMLQKVEITDPGDTTLLVGEQVDRVEFDIENSKAIREQGRPASGTPVLQGITKASLQTHSFISAASFQETTRVLTEAAVSGKVDSLQGLKENVIVGRLIPAGTGAVMNRLRAIAAKRDKDMQVEGESEVPAIPPVAEGSAPEAPPAE.

Residues C70, C72, C85, and C88 each coordinate Zn(2+). Mg(2+) is bound by residues D461, D463, and D465. 4 residues coordinate Zn(2+): C908, C982, C989, and C992. Positions 1467–1496 are disordered; it reads DKDMQVEGESEVPAIPPVAEGSAPEAPPAE.

Belongs to the RNA polymerase beta' chain family. In terms of assembly, the RNAP catalytic core consists of 2 alpha, 1 beta, 1 beta' and 1 omega subunit. When a sigma factor is associated with the core the holoenzyme is formed, which can initiate transcription. It depends on Mg(2+) as a cofactor. Zn(2+) serves as cofactor.

The catalysed reaction is RNA(n) + a ribonucleoside 5'-triphosphate = RNA(n+1) + diphosphate. In terms of biological role, DNA-dependent RNA polymerase catalyzes the transcription of DNA into RNA using the four ribonucleoside triphosphates as substrates. The polypeptide is DNA-directed RNA polymerase subunit beta' (Paramagnetospirillum magneticum (strain ATCC 700264 / AMB-1) (Magnetospirillum magneticum)).